The sequence spans 533 residues: MMSLESLWLWTFAISFIVLIAYLIGTWNHDFFSKRNIPSLKTVPFLGNMGPLVLRKASFAEHSQNIYNRLKGYKYGGMFEFMNPVLVLRDPELIKMVTVKDFEYFLDHRAPISEEAEPMFGKNLFNLRGHRWKEMRSTLSPAFTSSKMKNMFVLVSECGKQLGEFLMECSRDKNKKTEGCKIEREGDLLTVELKDLYTRYTNDVIATSAFGIGCDSLKNPKNEFFQMGKDVTNFGGIRQFIFLGYLFSPRLMKYLNLKFLSSKATEFFRFLVHNTMDTRKTKGIIRPDMIHLLMQAKEGTLKSEENGETNGKIASKPKWDDDDLTAQAVLFFFAGFDTASTLLCFMSHLLATNPDVQNRLQDEIDQSLEENDGKLTYEAIHSMKYLDMVVSESLRLYPPAIFTDRKCVKNYRLPMEPSYTLEPGDAVWIPIYAIHHDPKYYPNPEKFDPERFSDENKDNIKPFTYLPFGSGPRNCIGNRFALMESKIALVHLLCRFNLKVVSKTPIPIKITKKGFNMTVDGGFWLGLEERTNQ.

Cys475 serves as a coordination point for heme.

This sequence belongs to the cytochrome P450 family. Requires heme as cofactor.

It is found in the endoplasmic reticulum membrane. Its subcellular location is the microsome membrane. The protein is Cytochrome P450 9e2 (CYP9E2) of Blattella germanica (German cockroach).